A 433-amino-acid polypeptide reads, in one-letter code: Mitochondrial inner membrane magnesium transporter MIT1 (433 aa).

Positions 257 to 298 form a coiled coil; the sequence is TNKLLRDMMKIKNNLQKLSNLLNALRTNIEKILNNENDMKNM. A helical transmembrane segment spans residues 360–380; it reads FILLNAKISFSTLLFSISSVV. At 381–396 the chain is on the extracellular side; the sequence is TSLFGMNLKNFVEDSN. A helical transmembrane segment spans residues 397 to 417; that stretch reads YAFIIVSIFVSVWSIIGIYVT. The Mitochondrial matrix portion of the chain corresponds to 418–433; the sequence is KNINTLLKFFDRYNFR.

Belongs to the CorA metal ion transporter (MIT) (TC 1.A.35) family.

Its subcellular location is the mitochondrion inner membrane. Mitochondrial inner membrane magnesium transporter required for mitochondrial magnesium homeostasis. Involved in the development of the sporozoite in the mosquito vector midgut. The protein is Mitochondrial inner membrane magnesium transporter MIT1 of Plasmodium berghei (strain Anka).